A 336-amino-acid polypeptide reads, in one-letter code: Alcohol dehydrogenase, propanol-preferring (336 aa).

Residues C37, H58, C89, C92, C95, C103, and C145 each contribute to the Zn(2+) site.

The protein belongs to the zinc-containing alcohol dehydrogenase family. Zn(2+) is required as a cofactor.

It carries out the reaction a primary alcohol + NAD(+) = an aldehyde + NADH + H(+). The catalysed reaction is a secondary alcohol + NAD(+) = a ketone + NADH + H(+). Functionally, preferred specificity is towards 1-propanol. The sequence is that of Alcohol dehydrogenase, propanol-preferring (adhP) from Escherichia coli (strain K12).